The primary structure comprises 103 residues: N(4)-acetylcytidine amidohydrolase (103 aa).

The 89-residue stretch at I6–Q94 folds into the ASCH domain. K21 acts as the Proton acceptor in catalysis. Residue T24 is the Nucleophile of the active site. Catalysis depends on E74, which acts as the Proton donor.

The protein belongs to the N(4)-acetylcytidine amidohydrolase family.

It catalyses the reaction N(4)-acetylcytidine + H2O = cytidine + acetate + H(+). It carries out the reaction N(4)-acetyl-2'-deoxycytidine + H2O = 2'-deoxycytidine + acetate + H(+). The catalysed reaction is N(4)-acetylcytosine + H2O = cytosine + acetate + H(+). Functionally, catalyzes the hydrolysis of N(4)-acetylcytidine (ac4C). The sequence is that of N(4)-acetylcytidine amidohydrolase (yqfB) from Salmonella typhi.